The following is a 602-amino-acid chain: Elongation factor 4 (602 aa).

One can recognise a tr-type G domain in the interval 8-189; the sequence is KNIRNFSIIA…KIITTIPAPS (182 aa). GTP is bound by residues 20 to 25 and 136 to 139; these read DHGKST and NKID.

This sequence belongs to the TRAFAC class translation factor GTPase superfamily. Classic translation factor GTPase family. LepA subfamily.

It is found in the cell inner membrane. The catalysed reaction is GTP + H2O = GDP + phosphate + H(+). Its function is as follows. Required for accurate and efficient protein synthesis under certain stress conditions. May act as a fidelity factor of the translation reaction, by catalyzing a one-codon backward translocation of tRNAs on improperly translocated ribosomes. Back-translocation proceeds from a post-translocation (POST) complex to a pre-translocation (PRE) complex, thus giving elongation factor G a second chance to translocate the tRNAs correctly. Binds to ribosomes in a GTP-dependent manner. This chain is Elongation factor 4, found in Helicobacter pylori (strain Shi470).